The following is a 136-amino-acid chain: Small ribosomal subunit protein uS11c (136 aa).

Belongs to the universal ribosomal protein uS11 family. In terms of assembly, part of the 30S ribosomal subunit.

It is found in the plastid. The protein resides in the chloroplast. This Helianthus annuus (Common sunflower) protein is Small ribosomal subunit protein uS11c.